A 462-amino-acid chain; its full sequence is A-type ATP synthase subunit B (462 aa).

The protein belongs to the ATPase alpha/beta chains family. Has multiple subunits with at least A(3), B(3), C, D, E, F, H, I and proteolipid K(x).

It is found in the cell membrane. In terms of biological role, component of the A-type ATP synthase that produces ATP from ADP in the presence of a proton gradient across the membrane. The B chain is a regulatory subunit. The chain is A-type ATP synthase subunit B from Methanococcus vannielii (strain ATCC 35089 / DSM 1224 / JCM 13029 / OCM 148 / SB).